A 262-amino-acid polypeptide reads, in one-letter code: WUSCHEL-related homeobox 11 (262 aa).

Residues 1–11 (MDGGHSPDRHA) are compositionally biased toward basic and acidic residues. Disordered regions lie at residues 1-21 (MDGG…PVRS) and 79-115 (RRRQ…GHAG). Positions 18-82 (PVRSRWTPKP…NRRSRSRRRQ (65 aa)) form a DNA-binding region, homeobox. Residues 84 to 112 (QLQAQAQAAAAAASSGSPPTASSGGLAPG) show a composition bias toward low complexity.

It belongs to the WUS homeobox family. As to quaternary structure, interacts with ERF3.

The protein resides in the nucleus. Transcription factor which may be involved in developmental processes. Promotes the development of crown roots (both initiation and elongation), main components of the fibrous root system, by regulating the expression of genes required for crown root development and hormone-responsive genes involved in cytokinin (e.g. RR1, RR2, RR3 and RR4) and auxin (e.g. IAA5, IAA11, IAA23 and IAA31) signaling. The protein is WUSCHEL-related homeobox 11 of Oryza sativa subsp. indica (Rice).